Here is a 154-residue protein sequence, read N- to C-terminus: MEGLTSEQMVAFQEAFLLFDKNGDGCITLEELAAVTRSLGLEPTDQELNDMMREVDTDGNGIIDFQEFLSLIARKMKDGDGDEELKEAFEVLDKDQNGFISPTELRTVMTNLGEKMTDEEVEQMIREADTDGDGQVNYDEFVIMMKNAERKISG.

EF-hand domains lie at 7–42 (EQMVAFQEAFLLFDKNGDGCITLEELAAVTRSLGLE), 43–78 (PTDQELNDMMREVDTDGNGIIDFQEFLSLIARKMKD), 80–115 (DGDEELKEAFEVLDKDQNGFISPTELRTVMTNLGEK), and 116–151 (MTDEEVEQMIREADTDGDGQVNYDEFVIMMKNAERK). Ca(2+) contacts are provided by aspartate 20, asparagine 22, aspartate 24, cysteine 26, glutamate 31, aspartate 56, aspartate 58, asparagine 60, glutamate 67, aspartate 93, aspartate 95, asparagine 97, and glutamate 104. At lysine 115 the chain carries N6,N6,N6-trimethyllysine. Ca(2+) is bound by residues aspartate 129, aspartate 131, aspartate 133, glutamine 135, and glutamate 140.

The protein belongs to the calmodulin family.

Its function is as follows. Potential calcium sensor. This chain is Calmodulin-like protein 4 (CML4), found in Oryza sativa subsp. japonica (Rice).